Here is an 859-residue protein sequence, read N- to C-terminus: Transforming growth factor-beta receptor-associated protein 1 (859 aa).

In terms of domain architecture, CNH spans 24 to 297 (RGLLECVECC…HILQDFEGRV (274 aa)). One copy of the CHCR repeat lies at 563 to 727 (KRPLDEQQSG…LLAVYLGPGP (165 aa)).

This sequence belongs to the TRAP1 family. As to quaternary structure, interacts with TGFBR2 and ACVR2B; in the absence of ligand stimulation. Interacts with TGFBR1, ACVRL1, BMPR1A and ACVR1B; in the absence of ligand stimulation and to a less extent. Interacts with SMAD4; the interaction seems to be mutually exclusive with the interaction of SMAD4 and phosphorylated SMAD2. May interact with ALOX5. Interacts with RAB5C. Interacts with VPS8, VPS11 and VPS16. Component of the putative class C core vacuole/endosome tethering (CORVET) complex; the core of which composed of the class C Vps proteins VPS11, VPS16, VPS18 and VPS33A, is associated with VPS8 and TGFBRAP1.

Its subcellular location is the cytoplasm. The protein resides in the early endosome. In terms of biological role, plays a role in the TGF-beta/activin signaling pathway. It associates with inactive heteromeric TGF-beta and activin receptor complexes, mainly through the type II receptor, and is released upon activation of signaling. May recruit SMAD4 to the vicinity of the receptor complex and facilitate its interaction with receptor-regulated Smads, such as SMAD2. Functionally, plays a role in vesicle-mediated protein trafficking of the endocytic membrane transport pathway. Believed to act as a component of the putative CORVET endosomal tethering complexes which is proposed to be involved in the Rab5-to-Rab7 endosome conversion probably implicating MON1A/B, and via binding SNAREs and SNARE complexes to mediate tethering and docking events during SNARE-mediated membrane fusion. The CORVET complex is proposed to function as a Rab5 effector to mediate early endosome fusion probably in specific endosome subpopulations. Functions predominantly in APPL1-containing endosomes and in degradative but not recycling trafficking of endocytosed cargo. The chain is Transforming growth factor-beta receptor-associated protein 1 (TGFBRAP1) from Bos taurus (Bovine).